A 422-amino-acid chain; its full sequence is Adenylosuccinate synthetase (422 aa).

GTP is bound by residues 11 to 17 (GDEGKGK) and 39 to 41 (GHT). The active-site Proton acceptor is Asp12. Residues Asp12 and Gly39 each contribute to the Mg(2+) site. Residues 12–15 (DEGK), 37–40 (NAGH), Thr129, Arg143, Asn219, Thr234, and Arg298 each bind IMP. Catalysis depends on His40, which acts as the Proton donor. Substrate is bound at residue 294-300 (VTTGRRR). GTP is bound by residues Arg300, 326-328 (KLD), and 409-411 (GTG).

This sequence belongs to the adenylosuccinate synthetase family. In terms of assembly, homodimer. Requires Mg(2+) as cofactor.

It localises to the cytoplasm. It carries out the reaction IMP + L-aspartate + GTP = N(6)-(1,2-dicarboxyethyl)-AMP + GDP + phosphate + 2 H(+). Its pathway is purine metabolism; AMP biosynthesis via de novo pathway; AMP from IMP: step 1/2. In terms of biological role, plays an important role in the de novo pathway and in the salvage pathway of purine nucleotide biosynthesis. Catalyzes the first committed step in the biosynthesis of AMP from IMP. In Ajellomyces capsulatus (strain H143) (Darling's disease fungus), this protein is Adenylosuccinate synthetase.